The following is a 444-amino-acid chain: Phosphoglucosamine mutase (444 aa).

The active-site Phosphoserine intermediate is serine 102. The Mg(2+) site is built by serine 102, aspartate 241, aspartate 243, and aspartate 245. Serine 102 carries the phosphoserine modification.

The protein belongs to the phosphohexose mutase family. Mg(2+) serves as cofactor. Activated by phosphorylation.

It catalyses the reaction alpha-D-glucosamine 1-phosphate = D-glucosamine 6-phosphate. Catalyzes the conversion of glucosamine-6-phosphate to glucosamine-1-phosphate. This chain is Phosphoglucosamine mutase, found in Acidovorax ebreus (strain TPSY) (Diaphorobacter sp. (strain TPSY)).